The sequence spans 846 residues: Translation initiation factor IF-2 (846 aa).

A disordered region spans residues 198–219 (YKREEEEKKSKAKKAGGKGFKK). The span at 207–219 (SKAKKAGGKGFKK) shows a compositional bias: basic residues. Residues 345–512 (SRAPVVTIMG…AVLLQSEVLE (168 aa)) enclose the tr-type G domain. A G1 region spans residues 354 to 361 (GHVDHGKT). 354–361 (GHVDHGKT) is a binding site for GTP. The interval 379-383 (GITQH) is G2. Residues 400–403 (DTPG) form a G3 region. GTP-binding positions include 400 to 404 (DTPGH) and 454 to 457 (NKID). Residues 454 to 457 (NKID) form a G4 region. A G5 region spans residues 490–492 (SAK).

It belongs to the TRAFAC class translation factor GTPase superfamily. Classic translation factor GTPase family. IF-2 subfamily.

It is found in the cytoplasm. Functionally, one of the essential components for the initiation of protein synthesis. Protects formylmethionyl-tRNA from spontaneous hydrolysis and promotes its binding to the 30S ribosomal subunits. Also involved in the hydrolysis of GTP during the formation of the 70S ribosomal complex. The chain is Translation initiation factor IF-2 from Francisella tularensis subsp. novicida (strain U112).